We begin with the raw amino-acid sequence, 478 residues long: F-box/kelch-repeat protein At1g51550 (478 aa).

A disordered region spans residues 1-20 (MAAESTRNSSPPSTSQSSSP). A compositionally biased stretch (low complexity) spans 9 to 20 (SSPPSTSQSSSP). Residues 18–64 (SSPIINLPDDHLLTILLLLPVDSILSFSMTCKRYKSLACSDSLWEAL) enclose the F-box domain. Kelch repeat units lie at residues 135 to 187 (LVLF…VIGE) and 246 to 299 (KMVV…CIRE).

This chain is F-box/kelch-repeat protein At1g51550, found in Arabidopsis thaliana (Mouse-ear cress).